Consider the following 369-residue polypeptide: Epoxyqueuosine reductase (369 aa).

The active-site Proton donor is Asp135. The region spanning 177–209 is the 4Fe-4S ferredoxin-type domain; it reads IPLPVDEPSENQCGKCTACITSCPTNAIVAEGV. Positions 189, 192, 195, 199, 215, 242, 245, and 249 each coordinate [4Fe-4S] cluster.

The protein belongs to the QueG family. Monomer. It depends on cob(II)alamin as a cofactor. Requires [4Fe-4S] cluster as cofactor.

The protein localises to the cytoplasm. The enzyme catalyses epoxyqueuosine(34) in tRNA + AH2 = queuosine(34) in tRNA + A + H2O. The protein operates within tRNA modification; tRNA-queuosine biosynthesis. In terms of biological role, catalyzes the conversion of epoxyqueuosine (oQ) to queuosine (Q), which is a hypermodified base found in the wobble positions of tRNA(Asp), tRNA(Asn), tRNA(His) and tRNA(Tyr). This is Epoxyqueuosine reductase from Vibrio cholerae serotype O1 (strain ATCC 39315 / El Tor Inaba N16961).